Here is a 340-residue protein sequence, read N- to C-terminus: UDP-3-O-(3-hydroxymyristoyl)glucosamine N-acyltransferase (340 aa).

H239 serves as the catalytic Proton acceptor.

Belongs to the transferase hexapeptide repeat family. LpxD subfamily. Homotrimer.

The enzyme catalyses a UDP-3-O-[(3R)-3-hydroxyacyl]-alpha-D-glucosamine + a (3R)-hydroxyacyl-[ACP] = a UDP-2-N,3-O-bis[(3R)-3-hydroxyacyl]-alpha-D-glucosamine + holo-[ACP] + H(+). It catalyses the reaction UDP-3-O-[(3R)-3-hydroxytetradecanoyl]-alpha-D-glucosamine + (3R)-hydroxytetradecanoyl-[ACP] = UDP-2-N,3-O-bis[(3R)-3-hydroxytetradecanoyl]-alpha-D-glucosamine + holo-[ACP] + H(+). It functions in the pathway glycolipid biosynthesis; lipid IV(A) biosynthesis; lipid IV(A) from (3R)-3-hydroxytetradecanoyl-[acyl-carrier-protein] and UDP-N-acetyl-alpha-D-glucosamine: step 3/6. Functionally, catalyzes the N-acylation of UDP-3-O-(hydroxytetradecanoyl)glucosamine using 3-hydroxytetradecanoyl-ACP as the acyl donor. Is involved in the biosynthesis of lipid A, a phosphorylated glycolipid that anchors the lipopolysaccharide to the outer membrane of the cell. In Wigglesworthia glossinidia brevipalpis, this protein is UDP-3-O-(3-hydroxymyristoyl)glucosamine N-acyltransferase.